The chain runs to 406 residues: MAVAGGRGCVRSLREGVLWRSSPCHCDYTATRHFLGALQKLPLQAWVRKVHTAPLRTLFLLRPVPILLAAGGGYAGYRQYEKYRERQLEKLGLEIPPKLASHWEVSLYKSVPTRLLSRACGRLNQVELPSWLRRPVYSLYIWTFGVNMTEAAVEDLQHYRNLSEFFRRKLKPQARPVCGLHSVISPSDGKILTFGQVKNSEVEQVKGVTYSLESFLGPRACTEDLPFPPASSCDSFRNQLVTREGNELYHCVIYLAPGDYHCFHSPTDWTVSHRRHFPGSLMSVNPGMARWIKELFCHNERVVLTGDWKHGFFSLTAVGATNVGSIRIHFDQDLHTNSPSYSKGSYNDLSFVTHANKEGIPMRKGEPLGEFNLGSTIVLIFEAPKDFNFRLKAGQKILFGEALGSL.

Residues 1–49 (MAVAGGRGCVRSLREGVLWRSSPCHCDYTATRHFLGALQKLPLQAWVRK) constitute a mitochondrion transit peptide. The Mitochondrial matrix portion of the chain corresponds to 50 to 60 (VHTAPLRTLFL). Residues 61 to 79 (LRPVPILLAAGGGYAGYRQ) traverse the membrane as a helical segment. Topologically, residues 80–406 (YEKYRERQLE…ILFGEALGSL (327 aa)) are mitochondrial intermembrane. Active-site charge relay system; for autoendoproteolytic cleavage activity residues include Asp-188, His-264, and Ser-375. The Schiff-base intermediate with substrate; via pyruvic acid; for decarboxylase activity role is filled by Ser-375. A Pyruvic acid (Ser); by autocatalysis modification is found at Ser-375.

Belongs to the phosphatidylserine decarboxylase family. PSD-B subfamily. Eukaryotic type I sub-subfamily. As to quaternary structure, heterodimer of a large membrane-associated beta subunit and a small pyruvoyl-containing alpha subunit. Pyruvate is required as a cofactor. In terms of processing, is synthesized initially as an inactive proenzyme. Formation of the active enzyme involves a self-maturation process in which the active site pyruvoyl group is generated from an internal serine residue via an autocatalytic post-translational modification. Two non-identical subunits are generated from the proenzyme in this reaction, and the pyruvate is formed at the N-terminus of the alpha chain, which is derived from the carboxyl end of the proenzyme. The autoendoproteolytic cleavage occurs by a canonical serine protease mechanism, in which the side chain hydroxyl group of the serine supplies its oxygen atom to form the C-terminus of the beta chain, while the remainder of the serine residue undergoes an oxidative deamination to produce ammonia and the pyruvoyl prosthetic group on the alpha chain. During this reaction, the Ser that is part of the protease active site of the proenzyme becomes the pyruvoyl prosthetic group, which constitutes an essential element of the active site of the mature decarboxylase.

The protein resides in the mitochondrion inner membrane. The protein localises to the cytoplasm. It is found in the lipid droplet. The catalysed reaction is a 1,2-diacyl-sn-glycero-3-phospho-L-serine + H(+) = a 1,2-diacyl-sn-glycero-3-phosphoethanolamine + CO2. It functions in the pathway phospholipid metabolism; phosphatidylethanolamine biosynthesis. With respect to regulation, inhibited by hydroxylamine. Catalyzes the formation of phosphatidylethanolamine (PtdEtn) from phosphatidylserine (PtdSer). Plays a central role in phospholipid metabolism and in the interorganelle trafficking of phosphatidylserine. May be involved in lipid droplet biogenesis at the endoplasmic reticulum membrane. This Rattus norvegicus (Rat) protein is Phosphatidylserine decarboxylase proenzyme, mitochondrial.